The sequence spans 137 residues: Altered inheritance of mitochondria protein 11 (137 aa).

The next 2 helical transmembrane spans lie at Tyr-20 to Ile-37 and Leu-66 to Leu-88.

It belongs to the AIM11 family.

Its subcellular location is the membrane. This is Altered inheritance of mitochondria protein 11 (AIM11) from Saccharomyces cerevisiae (strain RM11-1a) (Baker's yeast).